Consider the following 95-residue polypeptide: UPF0381 protein HI_0400 (95 aa).

Belongs to the UPF0381 family.

In Haemophilus influenzae (strain ATCC 51907 / DSM 11121 / KW20 / Rd), this protein is UPF0381 protein HI_0400.